A 438-amino-acid chain; its full sequence is Gamma-glutamyl phosphate reductase (438 aa).

This sequence belongs to the gamma-glutamyl phosphate reductase family.

It localises to the cytoplasm. It carries out the reaction L-glutamate 5-semialdehyde + phosphate + NADP(+) = L-glutamyl 5-phosphate + NADPH + H(+). It functions in the pathway amino-acid biosynthesis; L-proline biosynthesis; L-glutamate 5-semialdehyde from L-glutamate: step 2/2. Functionally, catalyzes the NADPH-dependent reduction of L-glutamate 5-phosphate into L-glutamate 5-semialdehyde and phosphate. The product spontaneously undergoes cyclization to form 1-pyrroline-5-carboxylate. The protein is Gamma-glutamyl phosphate reductase of Natronomonas pharaonis (strain ATCC 35678 / DSM 2160 / CIP 103997 / JCM 8858 / NBRC 14720 / NCIMB 2260 / Gabara) (Halobacterium pharaonis).